Consider the following 2250-residue polypeptide: RNA1 polyprotein (2250 aa).

Residues 346–371 show a composition bias toward low complexity; it reads SPTVTPSSTPSTSRSSSPEPRVSSPS. A disordered region spans residues 346–372; that stretch reads SPTVTPSSTPSTSRSSSPEPRVSSPSG. The region spanning 849-1020 is the SF3 helicase domain; that stretch reads LRDAHNALSR…PHFHEFNLLA (172 aa). Residues 1225–1245 traverse the membrane as a helical segment; that stretch reads VALCAVLLVGYLIIKFAIFLF. Ser-1299 bears the O-(5'-phospho-RNA)-serine mark. The 214-residue stretch at 1319–1532 folds into the Peptidase C3 domain; the sequence is GPEEEPSQSL…YAQIVTLDDF (214 aa). Active-site for picornain 3C-like protease activity residues include His-1362, Asp-1400, and Cys-1495. The RdRp catalytic domain maps to 1814–1956; that stretch reads TNWFNGDYSR…SVNDVITEKF (143 aa).

The protein belongs to the comoviridae genome polyprotein B family. Post-translationally, specific enzymatic cleavages by picornain 3C-like protease in vivo yield mature proteins. Picornain 3C-like protease is autocatalytically processed. In terms of processing, viral genome-linked protein (VPg) is uridylylated by the polymerase and is covalently linked to the 5'-end of genomic RNA. This uridylylated form acts as a nucleotide-peptide primer for the polymerase.

It is found in the host membrane. The enzyme catalyses RNA(n) + a ribonucleoside 5'-triphosphate = RNA(n+1) + diphosphate. Its function is as follows. Picornain 3C-like protease is a thiol protease that probably cleaves the B and M polyproteins. Viral genome-linked protein (VPg) plays a role in RNA replication. The sequence is that of RNA1 polyprotein from Balsamorhiza sagittata (Apple).